A 235-amino-acid polypeptide reads, in one-letter code: Orotidine 5'-phosphate decarboxylase (235 aa).

Substrate is bound by residues Asp-12, Lys-34, 61–70 (DLKFHDIPNT), Thr-121, Arg-182, Gln-191, Gly-211, and Arg-212. Residue Lys-63 is the Proton donor of the active site.

It belongs to the OMP decarboxylase family. Type 1 subfamily. As to quaternary structure, homodimer.

The catalysed reaction is orotidine 5'-phosphate + H(+) = UMP + CO2. The protein operates within pyrimidine metabolism; UMP biosynthesis via de novo pathway; UMP from orotate: step 2/2. Catalyzes the decarboxylation of orotidine 5'-monophosphate (OMP) to uridine 5'-monophosphate (UMP). The protein is Orotidine 5'-phosphate decarboxylase of Marinomonas sp. (strain MWYL1).